The chain runs to 440 residues: Transposon Ty1-PR2 Gag polyprotein (440 aa).

3 stretches are compositionally biased toward polar residues: residues 1–10 (MESQQLSNYP), 48–60 (TKAN…TPAS), and 127–152 (QSQF…GNTF). Disordered stretches follow at residues 1–93 (MESQ…MMTQ), 126–173 (PQSQ…RPPP), and 352–440 (GSRN…PETY). A compositionally biased stretch (low complexity) spans 153–165 (TDSSSADSDMTST). The interval 299–401 (NNGIHINNKV…NSKSKTARAH (103 aa)) is RNA-binding. Low complexity predominate over residues 402–418 (NVSTSNNSPSTDNDSIS). Residue Ser416 is modified to Phosphoserine. Polar residues predominate over residues 419-428 (KSTTEPIQLN). Positions 429-440 (NKHDLHLRPETY) are enriched in basic and acidic residues.

As to quaternary structure, homotrimer.

Its subcellular location is the cytoplasm. In terms of biological role, capsid protein (CA) is the structural component of the virus-like particle (VLP), forming the shell that encapsulates the retrotransposons dimeric RNA genome. The particles are assembled from trimer-clustered units and there are holes in the capsid shells that allow for the diffusion of macromolecules. CA also has nucleocapsid-like chaperone activity, promoting primer tRNA(i)-Met annealing to the multipartite primer-binding site (PBS), dimerization of Ty1 RNA and initiation of reverse transcription. The protein is Transposon Ty1-PR2 Gag polyprotein (TY1A-PR2) of Saccharomyces cerevisiae (strain ATCC 204508 / S288c) (Baker's yeast).